Reading from the N-terminus, the 563-residue chain is CTP synthase (563 aa).

The segment at 1–278 is amidoligase domain; the sequence is MAKATAKNSA…DLRVLEQLHL (278 aa). S24 lines the CTP pocket. S24 is a UTP binding site. 25–30 contacts ATP; it reads SLGKGI. L-glutamine is bound at residue Y65. D82 lines the ATP pocket. Mg(2+) contacts are provided by D82 and E151. CTP is bound by residues 158-160, 198-203, and K234; these read DIE and KTKPSQ. Residues 198–203 and K234 contribute to the UTP site; that span reads KTKPSQ. 250 to 252 contacts ATP; it reads KDV. In terms of domain architecture, Glutamine amidotransferase type-1 spans 303 to 545; that stretch reads TIALVGKYIA…VKAALEQKKA (243 aa). G363 provides a ligand contact to L-glutamine. C390 acts as the Nucleophile; for glutamine hydrolysis in catalysis. Residues 391 to 394, E414, and R471 contribute to the L-glutamine site; that span reads LGMQ. Residues H518 and E520 contribute to the active site. A disordered region spans residues 542 to 563; it reads QKKANGKKPTAPSEKTKKTKTK.

This sequence belongs to the CTP synthase family. As to quaternary structure, homotetramer.

It carries out the reaction UTP + L-glutamine + ATP + H2O = CTP + L-glutamate + ADP + phosphate + 2 H(+). It catalyses the reaction L-glutamine + H2O = L-glutamate + NH4(+). The enzyme catalyses UTP + NH4(+) + ATP = CTP + ADP + phosphate + 2 H(+). The protein operates within pyrimidine metabolism; CTP biosynthesis via de novo pathway; CTP from UDP: step 2/2. Its activity is regulated as follows. Allosterically activated by GTP, when glutamine is the substrate; GTP has no effect on the reaction when ammonia is the substrate. The allosteric effector GTP functions by stabilizing the protein conformation that binds the tetrahedral intermediate(s) formed during glutamine hydrolysis. Inhibited by the product CTP, via allosteric rather than competitive inhibition. Functionally, catalyzes the ATP-dependent amination of UTP to CTP with either L-glutamine or ammonia as the source of nitrogen. Regulates intracellular CTP levels through interactions with the four ribonucleotide triphosphates. The protein is CTP synthase of Fibrobacter succinogenes (strain ATCC 19169 / S85).